Consider the following 558-residue polypeptide: Deleted in azoospermia protein 2 (558 aa).

The span at 1-10 (MSAANPETPN) shows a compositional bias: polar residues. Positions 1–27 (MSAANPETPNSTISREASTQSSSAAAS) are disordered. Positions 11 to 27 (STISREASTQSSSAAAS) are enriched in low complexity. In terms of domain architecture, RRM spans 40 to 115 (NTVFVGGIDA…KKLKLGPAIR (76 aa)). 15 DAZ domains span residues 167–190 (AYSAYPHSPGQVITGCQLLVYNYQ), 191–214 (EYPTYPDSAFQVTTGYQLPVYNYQ), 215–238 (PFPAYPRSPFQVTAGYQLPVYNYQ), 239–262 (AFPAYPNSPFQVATGYQFPVYNYQ), 263–286 (PFPAYPSSPFQVTAGYQLPVYNYQ), 287–310 (AFPAYPNSPFQVATGYQFPVYNYQ), 311–334 (AFPAYPNSPVQVTTGYQLPVYNYQ), 335–358 (AFPAYPNSPVQVTTGYQLPVYNYQ), 359–382 (AFPAYPSSPFQVTTGYQLPVYNYQ), 383–406 (AFPAYPSSPFQVTTGYQLPVYNYQ), 407–430 (AFPAYPSSPFQVTTGYQLPVYNYQ), 431–454 (AFPAYPSSPFQVTTGYQLPVYNYQ), 455–478 (AFPAYPSSPFQVTTGYQLPVYNYQ), 479–502 (AFPAYPSSPFQVTTGYQLPVYNYQ), and 503–526 (AFPAYPNSAVQVTTGYQFHVYNYQ).

This sequence belongs to the RRM DAZ family. Forms a heterodimer with BOLL and DAZL. Interacts with PUM2, DAZAP1, DAZAP2, DZIP1 and DZIP3. Testis specific.

Its subcellular location is the cytoplasm. The protein localises to the nucleus. RNA-binding protein that plays an essential role in spermatogenesis. May act by binding to the 3'-UTR of mRNAs and regulating their translation. The chain is Deleted in azoospermia protein 2 (DAZ2) from Homo sapiens (Human).